A 238-amino-acid polypeptide reads, in one-letter code: Ribonuclease PH (238 aa).

Residues Arg-86 and 124–126 (GTR) each bind phosphate.

Belongs to the RNase PH family. In terms of assembly, homohexameric ring arranged as a trimer of dimers.

The catalysed reaction is tRNA(n+1) + phosphate = tRNA(n) + a ribonucleoside 5'-diphosphate. In terms of biological role, phosphorolytic 3'-5' exoribonuclease that plays an important role in tRNA 3'-end maturation. Removes nucleotide residues following the 3'-CCA terminus of tRNAs; can also add nucleotides to the ends of RNA molecules by using nucleoside diphosphates as substrates, but this may not be physiologically important. Probably plays a role in initiation of 16S rRNA degradation (leading to ribosome degradation) during starvation. The protein is Ribonuclease PH of Shigella flexneri serotype 5b (strain 8401).